The primary structure comprises 71 residues: ATP synthase F(0) complex subunit e, mitochondrial (71 aa).

The residue at position 34 (Lys-34) is an N6-acetyllysine. Ser-68 bears the Phosphoserine mark.

The protein belongs to the ATPase e subunit family. Component of the ATP synthase complex composed at least of ATP5F1A/subunit alpha, ATP5F1B/subunit beta, ATP5MC1/subunit c (homooctomer), MT-ATP6/subunit a, MT-ATP8/subunit 8, ATP5ME/subunit e, ATP5MF/subunit f, ATP5MG/subunit g, ATP5MK/subunit k, ATP5MJ/subunit j, ATP5F1C/subunit gamma, ATP5F1D/subunit delta, ATP5F1E/subunit epsilon, ATP5PF/subunit F6, ATP5PB/subunit b, ATP5PD/subunit d, ATP5PO/subunit OSCP. ATP synthase complex consists of a soluble F(1) head domain (subunits alpha(3) and beta(3)) - the catalytic core - and a membrane F(0) domain - the membrane proton channel (subunits c, a, 8, e, f, g, k and j). These two domains are linked by a central stalk (subunits gamma, delta, and epsilon) rotating inside the F1 region and a stationary peripheral stalk (subunits F6, b, d, and OSCP). As to expression, mammary gland, liver, kidney, heart, spleen, brain and lung.

Its subcellular location is the mitochondrion. The protein localises to the mitochondrion inner membrane. Functionally, subunit e, of the mitochondrial membrane ATP synthase complex (F(1)F(0) ATP synthase or Complex V) that produces ATP from ADP in the presence of a proton gradient across the membrane which is generated by electron transport complexes of the respiratory chain. ATP synthase complex consist of a soluble F(1) head domain - the catalytic core - and a membrane F(1) domain - the membrane proton channel. These two domains are linked by a central stalk rotating inside the F(1) region and a stationary peripheral stalk. During catalysis, ATP synthesis in the catalytic domain of F(1) is coupled via a rotary mechanism of the central stalk subunits to proton translocation. In vivo, can only synthesize ATP although its ATP hydrolase activity can be activated artificially in vitro. Part of the complex F(0) domain. This chain is ATP synthase F(0) complex subunit e, mitochondrial, found in Mus musculus (Mouse).